Here is a 379-residue protein sequence, read N- to C-terminus: Chaperone protein DnaJ (379 aa).

The J domain occupies 5 to 69; it reads EYYERLGVDK…QKRAAYDQYG (65 aa). The segment at 141 to 223 adopts a CR-type zinc-finger fold; it reads GVEKQVKYNR…CHGSGHEKVA (83 aa). Zn(2+) is bound by residues cysteine 154, cysteine 157, cysteine 171, cysteine 174, cysteine 197, cysteine 200, cysteine 211, and cysteine 214. 4 CXXCXGXG motif repeats span residues 154-161, 171-178, 197-204, and 211-218; these read CHTCGGSG, CHKCGGRG, CDVCNGTG, and CETCHGSG.

Belongs to the DnaJ family. In terms of assembly, homodimer. Zn(2+) serves as cofactor.

The protein resides in the cytoplasm. In terms of biological role, participates actively in the response to hyperosmotic and heat shock by preventing the aggregation of stress-denatured proteins and by disaggregating proteins, also in an autonomous, DnaK-independent fashion. Unfolded proteins bind initially to DnaJ; upon interaction with the DnaJ-bound protein, DnaK hydrolyzes its bound ATP, resulting in the formation of a stable complex. GrpE releases ADP from DnaK; ATP binding to DnaK triggers the release of the substrate protein, thus completing the reaction cycle. Several rounds of ATP-dependent interactions between DnaJ, DnaK and GrpE are required for fully efficient folding. Also involved, together with DnaK and GrpE, in the DNA replication of plasmids through activation of initiation proteins. The sequence is that of Chaperone protein DnaJ from Lactococcus lactis subsp. lactis (strain IL1403) (Streptococcus lactis).